The primary structure comprises 337 residues: tRNA N6-adenosine threonylcarbamoyltransferase (337 aa).

Fe cation-binding residues include His111 and His115. Substrate-binding positions include 134–138, Asp167, Gly180, and Asn272; that span reads LVSGG. Residue Asp300 participates in Fe cation binding.

This sequence belongs to the KAE1 / TsaD family. It depends on Fe(2+) as a cofactor.

It localises to the cytoplasm. The catalysed reaction is L-threonylcarbamoyladenylate + adenosine(37) in tRNA = N(6)-L-threonylcarbamoyladenosine(37) in tRNA + AMP + H(+). Required for the formation of a threonylcarbamoyl group on adenosine at position 37 (t(6)A37) in tRNAs that read codons beginning with adenine. Is involved in the transfer of the threonylcarbamoyl moiety of threonylcarbamoyl-AMP (TC-AMP) to the N6 group of A37, together with TsaE and TsaB. TsaD likely plays a direct catalytic role in this reaction. The protein is tRNA N6-adenosine threonylcarbamoyltransferase of Salmonella schwarzengrund (strain CVM19633).